We begin with the raw amino-acid sequence, 341 residues long: Adhesion protein Bd37 (341 aa).

The signal sequence occupies residues 1-21 (MKTSKILNTAAICLLAMGFNG). Residues Asn-23 and Asn-30 are each glycosylated (N-linked (GlcNAc...) asparagine). The cysteines at positions 26 and 307 are disulfide-linked. Residues 36–75 (AAANPVVSTPGNDAQQAGTQQGGANSKSVPEQQPQQAAGE) are disordered. A compositionally biased stretch (low complexity) spans 49–59 (AQQAGTQQGGA). Positions 60–75 (NSKSVPEQQPQQAAGE) are enriched in polar residues. Ser-311 carries the GPI-anchor amidated serine lipid modification. A propeptide spans 312–341 (GQGSSPKKPSFAAVPSSLSAIVFGIIVSMF) (removed in mature form).

The signal sequence is cleaved. In terms of processing, glycosylated. Post-translationally, palmitoylated. Not myristoylated.

Its subcellular location is the cell membrane. It localises to the secreted. The protein resides in the vesicle. Binds to host erythrocytes. This Babesia divergens protein is Adhesion protein Bd37.